A 478-amino-acid chain; its full sequence is ATP-dependent RNA helicase DDX19A (478 aa).

At A2 the chain carries N-acetylalanine. Positions 2–299 (ATDSWALAVD…DPNIIKLKRE (298 aa)) are N-terminal lobe. K26 is covalently cross-linked (Glycyl lysine isopeptide (Lys-Gly) (interchain with G-Cter in SUMO1); alternate). K26 is covalently cross-linked (Glycyl lysine isopeptide (Lys-Gly) (interchain with G-Cter in SUMO2); alternate). A disordered region spans residues 34–53 (TNGVIKTSTTAEKTEEEEKE). T42 is modified (phosphothreonine). The interval 54 to 67 (DRAAQSLLNKLIRS) is N-terminal helix. The Q motif signature appears at 91 to 119 (KSFEELRLKPQLLQGVYAMGFNRPSKIQE). ATP is bound by residues Q118 and 137–144 (SQSGTGKT). The Helicase ATP-binding domain maps to 124 to 294 (MMLAEPPQNL…QKVVPDPNII (171 aa)). Positions 241 to 244 (DEAD) match the DEAD box motif. Residues 300–478 (EETLDTIKQY…DLDEIEKIAN (179 aa)) are C-terminal lobe. Positions 305-473 (TIKQYYVLCN…RLDTDDLDEI (169 aa)) constitute a Helicase C-terminal domain. ATP is bound by residues R428 and R431.

This sequence belongs to the DEAD box helicase family. DDX19/DBP5 subfamily. Found in testis, heart, brain, liver, skeletal muscle, and kidney.

It is found in the cytoplasm. The protein localises to the nucleus. Its subcellular location is the nucleoplasm. It carries out the reaction ATP + H2O = ADP + phosphate + H(+). In terms of biological role, ATP-dependent RNA helicase involved in mRNA export from the nucleus. Rather than unwinding RNA duplexes, DDX19 functions as a remodeler of ribonucleoprotein particles, whereby proteins bound to nuclear mRNA are dissociated and replaced by cytoplasmic mRNA binding proteins. The sequence is that of ATP-dependent RNA helicase DDX19A (Ddx19a) from Mus musculus (Mouse).